The following is a 366-amino-acid chain: tRNA/tmRNA (uracil-C(5))-methyltransferase (366 aa).

Positions 190, 218, 223, 239, and 299 each coordinate S-adenosyl-L-methionine. The Nucleophile role is filled by C324. The active-site Proton acceptor is the E358.

The protein belongs to the class I-like SAM-binding methyltransferase superfamily. RNA M5U methyltransferase family. TrmA subfamily.

It carries out the reaction uridine(54) in tRNA + S-adenosyl-L-methionine = 5-methyluridine(54) in tRNA + S-adenosyl-L-homocysteine + H(+). It catalyses the reaction uridine(341) in tmRNA + S-adenosyl-L-methionine = 5-methyluridine(341) in tmRNA + S-adenosyl-L-homocysteine + H(+). Dual-specificity methyltransferase that catalyzes the formation of 5-methyluridine at position 54 (m5U54) in all tRNAs, and that of position 341 (m5U341) in tmRNA (transfer-mRNA). This is tRNA/tmRNA (uracil-C(5))-methyltransferase from Shigella dysenteriae serotype 1 (strain Sd197).